Reading from the N-terminus, the 481-residue chain is Glycogen synthase (481 aa).

K15 lines the ADP-alpha-D-glucose pocket.

This sequence belongs to the glycosyltransferase 1 family. Bacterial/plant glycogen synthase subfamily.

The catalysed reaction is [(1-&gt;4)-alpha-D-glucosyl](n) + ADP-alpha-D-glucose = [(1-&gt;4)-alpha-D-glucosyl](n+1) + ADP + H(+). It functions in the pathway glycan biosynthesis; glycogen biosynthesis. In terms of biological role, synthesizes alpha-1,4-glucan chains using ADP-glucose. In Mesorhizobium japonicum (strain LMG 29417 / CECT 9101 / MAFF 303099) (Mesorhizobium loti (strain MAFF 303099)), this protein is Glycogen synthase.